Here is a 430-residue protein sequence, read N- to C-terminus: Adenylosuccinate synthetase (430 aa).

GTP is bound by residues 12-18 (GDEGKGK) and 40-42 (GHT). Catalysis depends on aspartate 13, which acts as the Proton acceptor. Mg(2+)-binding residues include aspartate 13 and glycine 40. IMP-binding positions include 13–16 (DEGK), 38–41 (NAGH), threonine 130, arginine 144, glutamine 224, threonine 239, and arginine 303. Catalysis depends on histidine 41, which acts as the Proton donor. 299–305 (TTTGRKR) serves as a coordination point for substrate. GTP is bound by residues arginine 305, 331 to 333 (KLD), and 413 to 415 (STS).

Belongs to the adenylosuccinate synthetase family. As to quaternary structure, homodimer. Mg(2+) is required as a cofactor.

The protein resides in the cytoplasm. The catalysed reaction is IMP + L-aspartate + GTP = N(6)-(1,2-dicarboxyethyl)-AMP + GDP + phosphate + 2 H(+). It participates in purine metabolism; AMP biosynthesis via de novo pathway; AMP from IMP: step 1/2. In terms of biological role, plays an important role in the de novo pathway of purine nucleotide biosynthesis. Catalyzes the first committed step in the biosynthesis of AMP from IMP. The polypeptide is Adenylosuccinate synthetase (Ruegeria pomeroyi (strain ATCC 700808 / DSM 15171 / DSS-3) (Silicibacter pomeroyi)).